The following is a 184-amino-acid chain: Flavin prenyltransferase UbiX (184 aa).

FMN-binding positions include 9–11, Ser34, 85–88, and Arg120; these read GAS and SMKT. Dimethylallyl phosphate is bound by residues Tyr150 and Arg166.

The protein belongs to the UbiX/PAD1 family.

It catalyses the reaction dimethylallyl phosphate + FMNH2 = prenylated FMNH2 + phosphate. Functionally, flavin prenyltransferase that catalyzes the synthesis of the prenylated FMN cofactor (prenyl-FMN) for 4-hydroxy-3-polyprenylbenzoic acid decarboxylase UbiD. The prenyltransferase is metal-independent and links a dimethylallyl moiety from dimethylallyl monophosphate (DMAP) to the flavin N5 and C6 atoms of FMN. In Methanocaldococcus jannaschii (strain ATCC 43067 / DSM 2661 / JAL-1 / JCM 10045 / NBRC 100440) (Methanococcus jannaschii), this protein is Flavin prenyltransferase UbiX.